We begin with the raw amino-acid sequence, 1122 residues long: RecBCD enzyme subunit RecC (1122 aa).

The protein belongs to the RecC family. Heterotrimer of RecB, RecC and RecD. All subunits contribute to DNA-binding. Interacts with YgbT (Cas1). In terms of assembly, (Microbial infection) Lambda virus GamS protein interacts with the enzyme without displacing any of the subunits.

Its activity is regulated as follows. After reacting with DNA bearing a Chi site the holoenzyme is disassembled and loses exonuclease activity, DNA unwinding and Chi-directed DNA cleavage; RecB remains complexed with ssDNA, which may prevent holoenzyme reassembly. High levels of Mg(2+) (13 mM MgCl(2+)) or incubation with DNase allow holoenzyme reassembly, suggesting it is DNA bound to RecB that prevents reassembly. With respect to regulation, (Microbial infection) RecBCD is inhibited by the lambda virus gam protein (both GamL and GamS isoforms); in vitro a short preincubation prior to adding DNA results in maximal inhibition. Its function is as follows. A helicase/nuclease that prepares dsDNA breaks (DSB) for recombinational DNA repair. Binds to DSBs and unwinds DNA via a rapid (&gt;1 kb/second) and highly processive (&gt;30 kb) ATP-dependent bidirectional helicase. Unwinds dsDNA until it encounters a Chi (crossover hotspot instigator, 5'-GCTGGTGG-3') sequence from the 3' direction. Cuts ssDNA a few nucleotides 3' to Chi site, by nicking one strand or switching the strand degraded (depending on the reaction conditions). The properties and activities of the enzyme are changed at Chi. The Chi-altered holoenzyme produces a long 3'-ssDNA overhang which facilitates RecA-binding to the ssDNA for homologous DNA recombination and repair. Holoenzyme degrades any linearized DNA that is unable to undergo homologous recombination. In the holoenzyme this subunit almost certainly recognizes the wild-type Chi sequence, when added to isolated RecB increases its ATP-dependent helicase processivity. The RecBC complex requires the RecD subunit for nuclease activity, but can translocate along ssDNA in both directions. The RecBCD complex does not unwind G-quadruplex DNA. The chain is RecBCD enzyme subunit RecC from Escherichia coli (strain K12).